The primary structure comprises 124 residues: Small ribosomal subunit protein bS6 (124 aa).

The interval 96–124 (ETGPSPMMKEVQREEAKKAAAAQPTEAQA) is disordered. Positions 114–124 (AAAAQPTEAQA) are enriched in low complexity.

It belongs to the bacterial ribosomal protein bS6 family.

Its function is as follows. Binds together with bS18 to 16S ribosomal RNA. This chain is Small ribosomal subunit protein bS6, found in Burkholderia mallei (strain ATCC 23344).